The primary structure comprises 506 residues: Ribose import ATP-binding protein RbsA 1 (506 aa).

2 consecutive ABC transporter domains span residues 5–241 and 254–498; these read LALT…VGRR and RDAA…TSDA. Residue 37-44 coordinates ATP; the sequence is GENGAGKS.

It belongs to the ABC transporter superfamily. Ribose importer (TC 3.A.1.2.1) family. In terms of assembly, the complex is composed of an ATP-binding protein (RbsA), two transmembrane proteins (RbsC) and a solute-binding protein (RbsB).

The protein resides in the cell inner membrane. The enzyme catalyses D-ribose(out) + ATP + H2O = D-ribose(in) + ADP + phosphate + H(+). Its function is as follows. Part of the ABC transporter complex RbsABC involved in ribose import. Responsible for energy coupling to the transport system. The polypeptide is Ribose import ATP-binding protein RbsA 1 (Burkholderia thailandensis (strain ATCC 700388 / DSM 13276 / CCUG 48851 / CIP 106301 / E264)).